Reading from the N-terminus, the 72-residue chain is Translation initiation factor IF-1 (72 aa).

The S1-like domain occupies 1-72 (MAKEEVLEFP…TKGRITYRFK (72 aa)).

Belongs to the IF-1 family. Component of the 30S ribosomal translation pre-initiation complex which assembles on the 30S ribosome in the order IF-2 and IF-3, IF-1 and N-formylmethionyl-tRNA(fMet); mRNA recruitment can occur at any time during PIC assembly.

It localises to the cytoplasm. Its function is as follows. One of the essential components for the initiation of protein synthesis. Stabilizes the binding of IF-2 and IF-3 on the 30S subunit to which N-formylmethionyl-tRNA(fMet) subsequently binds. Helps modulate mRNA selection, yielding the 30S pre-initiation complex (PIC). Upon addition of the 50S ribosomal subunit IF-1, IF-2 and IF-3 are released leaving the mature 70S translation initiation complex. The protein is Translation initiation factor IF-1 of Sinorhizobium medicae (strain WSM419) (Ensifer medicae).